The following is a 525-amino-acid chain: Keratin, type II cytoskeletal 71 (525 aa).

The interval 1–131 (MSRQFTCKSG…DPEIQKVRAQ (131 aa)) is head. The coil 1A stretch occupies residues 132–167 (EREQIKALNNKFASFIDKVRFLEQQNQVLETKWELL). One can recognise an IF rod domain in the interval 132–445 (EREQIKALNN…KLLESEECRM (314 aa)). Positions 168–186 (QQLDLNNCKNNLEPILEGY) are linker 1. The coil 1B stretch occupies residues 187 to 278 (ISNLRKQLET…CLYEAEIAQI (92 aa)). The linker 12 stretch occupies residues 279 to 302 (QSHISDMSVILSMDNNRDLNLDSI). Positions 303-441 (IDEVRAQYED…ATYRKLLESE (139 aa)) are coil 2. A tail region spans residues 442–525 (ECRMSGEFPS…LSAPSKKASR (84 aa)). The segment at 492–525 (VRGGESRSRSSTTDYKDALGKGSSLSAPSKKASR) is disordered. The span at 495-510 (GESRSRSSTTDYKDAL) shows a compositional bias: basic and acidic residues.

Belongs to the intermediate filament family. Heterodimer of a type I and a type II keratin. Associates with KRT16 and/or KRT17.

The protein resides in the cytoplasm. It is found in the cytoskeleton. Plays a central role in hair formation. Essential component of keratin intermediate filaments in the inner root sheath (IRS) of the hair follicle. The sequence is that of Keratin, type II cytoskeletal 71 (KRT71) from Bos taurus (Bovine).